A 408-amino-acid chain; its full sequence is Arginine biosynthesis bifunctional protein ArgJ 1 (408 aa).

Positions 154, 180, 191, 277, 403, and 408 each coordinate substrate. Thr191 acts as the Nucleophile in catalysis.

This sequence belongs to the ArgJ family. In terms of assembly, heterotetramer of two alpha and two beta chains.

It is found in the cytoplasm. The enzyme catalyses N(2)-acetyl-L-ornithine + L-glutamate = N-acetyl-L-glutamate + L-ornithine. It carries out the reaction L-glutamate + acetyl-CoA = N-acetyl-L-glutamate + CoA + H(+). The protein operates within amino-acid biosynthesis; L-arginine biosynthesis; L-ornithine and N-acetyl-L-glutamate from L-glutamate and N(2)-acetyl-L-ornithine (cyclic): step 1/1. It functions in the pathway amino-acid biosynthesis; L-arginine biosynthesis; N(2)-acetyl-L-ornithine from L-glutamate: step 1/4. Catalyzes two activities which are involved in the cyclic version of arginine biosynthesis: the synthesis of N-acetylglutamate from glutamate and acetyl-CoA as the acetyl donor, and of ornithine by transacetylation between N(2)-acetylornithine and glutamate. The protein is Arginine biosynthesis bifunctional protein ArgJ 1 of Clostridium acetobutylicum (strain ATCC 824 / DSM 792 / JCM 1419 / IAM 19013 / LMG 5710 / NBRC 13948 / NRRL B-527 / VKM B-1787 / 2291 / W).